The sequence spans 2430 residues: Protein TASOR 2 (2430 aa).

3 positions are modified to phosphoserine: S19, S219, and S384. Disordered stretches follow at residues 416 to 488 and 577 to 648; these read LDRK…GETA and RGTS…SQSS. S685 is subject to Phosphoserine. Positions 704-727 are disordered; it reads LLLQQKPPDDPVVKPKDRPPSARV. Over residues 710-723 the composition is skewed to basic and acidic residues; sequence PPDDPVVKPKDRPP. Phosphoserine occurs at positions 1025, 1087, and 1172. Residues 1331-1360 form a disordered region; the sequence is LTESREVSSADNVSVYPSVSEEPVENKERK. S1541 bears the Phosphoserine mark. The disordered stretch occupies residues 1700–1727; that stretch reads EAELHKETTGPGTAGPQSNTTSSLKGER. Residues 1714–1723 show a composition bias toward polar residues; sequence GPQSNTTSSL. S1848 is subject to Phosphoserine. K2007 participates in a covalent cross-link: Glycyl lysine isopeptide (Lys-Gly) (interchain with G-Cter in SUMO2). Phosphoserine occurs at positions 2009, 2037, 2062, and 2066. The disordered stretch occupies residues 2046–2069; the sequence is SDPRPQGQPRRGYTASSLDSSSSW.

This sequence belongs to the TASOR family.

This Homo sapiens (Human) protein is Protein TASOR 2.